We begin with the raw amino-acid sequence, 471 residues long: Protoheme IX farnesyltransferase, mitochondrial (471 aa).

The N-terminal 60 residues, 1-60 (MLLSNVAVNRTVVHTQLVSGSRSALHALSRTSHSVPVTHTHQRRHIFSHKRRLSSSTLAI), are a transit peptide targeting the mitochondrion. The next 6 membrane-spanning stretches (helical) occupy residues 188-208 (AVSL…SGSA), 247-267 (ITGT…VAIL), 287-307 (IINT…GWAA), 312-332 (LLHP…FPHF), 368-388 (LLMF…WWFV), and 430-450 (KLFW…MIHK).

It belongs to the UbiA prenyltransferase family.

It is found in the mitochondrion membrane. It carries out the reaction heme b + (2E,6E)-farnesyl diphosphate + H2O = Fe(II)-heme o + diphosphate. In terms of biological role, converts protoheme IX and farnesyl diphosphate to heme O. The chain is Protoheme IX farnesyltransferase, mitochondrial (COX10) from Yarrowia lipolytica (strain CLIB 122 / E 150) (Yeast).